The sequence spans 382 residues: Flap endonuclease 1-A (382 aa).

Positions 1–104 are N-domain; it reads MGIHGLAKLI…GELAKRSERR (104 aa). Residue Asp-34 participates in Mg(2+) binding. DNA-binding residues include Arg-47 and Arg-70. Positions 86, 158, 160, 179, and 181 each coordinate Mg(2+). An I-domain region spans residues 122–253; it reads NIEKFTKRLV…KRAIDLIRQH (132 aa). Glu-158 is a binding site for DNA. Positions 231 and 233 each coordinate DNA. Asp-233 serves as a coordination point for Mg(2+). The interaction with PCNA stretch occupies residues 336–344; the sequence is TQGRLDDFF. Residues 350–382 form a disordered region; it reads VSSTKRKEAESKGSAKKKAKTGGTPAGKFKRGK.

Belongs to the XPG/RAD2 endonuclease family. FEN1 subfamily. In terms of assembly, interacts with PCNA. Three molecules of fen1 bind to one PCNA trimer with each molecule binding to one PCNA monomer. PCNA stimulates the nuclease activity without altering cleavage specificity. It depends on Mg(2+) as a cofactor. In terms of processing, phosphorylated. Phosphorylation upon DNA damage induces relocalization to the nuclear plasma.

The protein resides in the nucleus. It is found in the nucleolus. Its subcellular location is the nucleoplasm. The protein localises to the mitochondrion. Structure-specific nuclease with 5'-flap endonuclease and 5'-3' exonuclease activities involved in DNA replication and repair. During DNA replication, cleaves the 5'-overhanging flap structure that is generated by displacement synthesis when DNA polymerase encounters the 5'-end of a downstream Okazaki fragment. It enters the flap from the 5'-end and then tracks to cleave the flap base, leaving a nick for ligation. Also involved in the long patch base excision repair (LP-BER) pathway, by cleaving within the apurinic/apyrimidinic (AP) site-terminated flap. Acts as a genome stabilization factor that prevents flaps from equilibrating into structures that lead to duplications and deletions. Also possesses 5'-3' exonuclease activity on nicked or gapped double-stranded DNA, and exhibits RNase H activity. Also involved in replication and repair of rDNA and in repairing mitochondrial DNA. The sequence is that of Flap endonuclease 1-A (fen1-a) from Xenopus laevis (African clawed frog).